The sequence spans 244 residues: MNPQLSPKAIREIREGTCNPLGAPQVTTDLSENIILTSLDDLHNWARLSSLWPLLYGTACCFIEFAALIGSRFDFDRFGLVPRSSPRQADLLIVAGTVTMKMAPALVRLYEQMPEPKYVIAMGACTITGGMFSADSTTAVRGVDKLIPVDLYLPGCPPRPEAIFDAVIKLRKKVGNESILEREKTEQTHRYITYKHEMNLVFSQNTGEYLNKTSTNVFPSSKKEKITELPENREQTEIINSEEE.

Residues C60, C61, C125, and C156 each contribute to the [4Fe-4S] cluster site. Residues 221 to 236 (SKKEKITELPENREQT) are compositionally biased toward basic and acidic residues. Positions 221 to 244 (SKKEKITELPENREQTEIINSEEE) are disordered.

The protein belongs to the complex I 20 kDa subunit family. In terms of assembly, NDH-1 can be composed of about 15 different subunits; different subcomplexes with different compositions have been identified which probably have different functions. [4Fe-4S] cluster is required as a cofactor.

The protein resides in the cellular thylakoid membrane. It carries out the reaction a plastoquinone + NADH + (n+1) H(+)(in) = a plastoquinol + NAD(+) + n H(+)(out). It catalyses the reaction a plastoquinone + NADPH + (n+1) H(+)(in) = a plastoquinol + NADP(+) + n H(+)(out). NDH-1 shuttles electrons from an unknown electron donor, via FMN and iron-sulfur (Fe-S) centers, to quinones in the respiratory and/or the photosynthetic chain. The immediate electron acceptor for the enzyme in this species is believed to be plastoquinone. Couples the redox reaction to proton translocation, and thus conserves the redox energy in a proton gradient. Cyanobacterial NDH-1 also plays a role in inorganic carbon-concentration. The chain is NAD(P)H-quinone oxidoreductase subunit K from Prochlorococcus marinus (strain MIT 9312).